A 112-amino-acid chain; its full sequence is Putative iron-sulfur cluster insertion protein ErpA (112 aa).

Positions 40, 104, and 106 each coordinate iron-sulfur cluster.

It belongs to the HesB/IscA family. Homodimer. Iron-sulfur cluster is required as a cofactor.

In terms of biological role, required for insertion of 4Fe-4S clusters. The protein is Putative iron-sulfur cluster insertion protein ErpA of Neisseria gonorrhoeae (strain ATCC 700825 / FA 1090).